The following is a 148-amino-acid chain: Deoxyuridine 5'-triphosphate nucleotidohydrolase (148 aa).

Residues arginine 67–glycine 69, asparagine 80, leucine 84–aspartate 86, and methionine 94 contribute to the substrate site.

It belongs to the dUTPase family. Requires Mg(2+) as cofactor.

The catalysed reaction is dUTP + H2O = dUMP + diphosphate + H(+). It functions in the pathway pyrimidine metabolism; dUMP biosynthesis; dUMP from dCTP (dUTP route): step 2/2. Its function is as follows. This enzyme is involved in nucleotide metabolism: it produces dUMP, the immediate precursor of thymidine nucleotides and it decreases the intracellular concentration of dUTP so that uracil cannot be incorporated into DNA. In Ralstonia pickettii (strain 12J), this protein is Deoxyuridine 5'-triphosphate nucleotidohydrolase.